A 354-amino-acid polypeptide reads, in one-letter code: DNA polymerase IV (354 aa).

One can recognise a UmuC domain in the interval 6–187 (IIHVDCDCFY…LPVARLHGVG (182 aa)). Mg(2+) is bound by residues Asp-10 and Asp-105. Glu-106 is an active-site residue.

Belongs to the DNA polymerase type-Y family. In terms of assembly, monomer. Mg(2+) is required as a cofactor.

It localises to the cytoplasm. It catalyses the reaction DNA(n) + a 2'-deoxyribonucleoside 5'-triphosphate = DNA(n+1) + diphosphate. Its function is as follows. Poorly processive, error-prone DNA polymerase involved in untargeted mutagenesis. Copies undamaged DNA at stalled replication forks, which arise in vivo from mismatched or misaligned primer ends. These misaligned primers can be extended by PolIV. Exhibits no 3'-5' exonuclease (proofreading) activity. May be involved in translesional synthesis, in conjunction with the beta clamp from PolIII. In Pseudomonas putida (strain ATCC 700007 / DSM 6899 / JCM 31910 / BCRC 17059 / LMG 24140 / F1), this protein is DNA polymerase IV.